Consider the following 180-residue polypeptide: Nucleoplasmin-3 (180 aa).

Ala-2 is modified (N-acetylalanine). A phosphoserine mark is found at Ser-13 and Ser-16. Arg-27 bears the Omega-N-methylarginine mark. Positions 141–180 are disordered; that stretch reads TMSNDVSEEESEEEEEEEDSDEEEAELCPILPAKKQGGRP. Over residues 146 to 166 the composition is skewed to acidic residues; the sequence is VSEEESEEEEEEEDSDEEEAE. Ser-147, Ser-151, and Ser-160 each carry phosphoserine.

Belongs to the nucleoplasmin family. In terms of assembly, interacts with NPM (via N-terminus). Forms a pentamer with NPM at a ratio 4:1 (NPM3/NPM). Two pentamers form a decamer. Post-translationally, phosphorylated.

Its subcellular location is the nucleus. It localises to the nucleolus. In terms of biological role, plays a role in the regulation of diverse cellular processes such as ribosome biogenesis, chromatin remodeling or protein chaperoning. Modulates the histone chaperone function and the RNA-binding activity of nucleolar phosphoprotein B23/NPM. Efficiently mediates chromatin remodeling when included in a pentamer containing NPM3 and NPM. This Pongo abelii (Sumatran orangutan) protein is Nucleoplasmin-3 (NPM3).